We begin with the raw amino-acid sequence, 142 residues long: MHPNNKNSFKSKKKFIDRREAKSQDIKRALTHRARLRKNYFKLLEKEGLQEEGKPEDENDIRPTKKKGINFEERAAIVKQRKEEKRKFKLASVQAKLEKIESNSKERALKREQLKKSTTKGQPLMGPRINDLLDKIKKNEMS.

Disordered regions lie at residues Met1 to Ser23, Glu47 to Lys67, and Lys99 to Ser142. Positions Gln94 to Lys116 form a coiled coil. 2 stretches are compositionally biased toward basic and acidic residues: residues Lys99–Lys115 and Asp131–Ser142.

This sequence belongs to the FYV7 family.

It localises to the nucleus. Its subcellular location is the nucleolus. Involved in the processing of the 20S pre-rRNA. The chain is rRNA-processing protein FYV7 (FYV7) from Candida albicans (strain SC5314 / ATCC MYA-2876) (Yeast).